A 423-amino-acid chain; its full sequence is Protein TylM3 (423 aa).

Low complexity predominate over residues 1–21; it reads MNTAAGPTGTAAGGTTAPAAA. 2 disordered regions span residues 1–26 and 117–149; these read MNTA…DLSR and GSAL…RDDP. The segment covering 139 to 149 has biased composition (basic and acidic residues); that stretch reads RPPDREERDDP.

It belongs to the cytochrome P450 family.

Its pathway is antibiotic biosynthesis; tylosin biosynthesis. Involved in the biosynthesis of the macrolide antibiotic tylosin derived from the polyketide lactone tylactone. TylM3 is required for the glycosylation of the 5-hydroxyl group of tylactone to yield 5-O-mycaminosytylactone. The sequence is that of Protein TylM3 from Streptomyces fradiae (Streptomyces roseoflavus).